The following is a 109-amino-acid chain: A-type ATP synthase subunit F (109 aa).

The protein belongs to the V-ATPase F subunit family. As to quaternary structure, has multiple subunits with at least A(3), B(3), C, D, E, F, H, I and proteolipid K(x).

Its subcellular location is the cell membrane. Component of the A-type ATP synthase that produces ATP from ADP in the presence of a proton gradient across the membrane. In Haloquadratum walsbyi (strain DSM 16790 / HBSQ001), this protein is A-type ATP synthase subunit F.